The chain runs to 131 residues: MDFQQLADVADKWCSNTPFDLIATEETERRMDFYADPGVSFYVLCPESGCGDHFHVWSESEDCLPFLQLAQDYISSCGKKTLHEILEKVFKSFRPLLGLPDVDDDTFEEYNADVEEEEPEADHQQMGVSQQ.

A compositionally biased stretch (acidic residues) spans 107–120 (FEEYNADVEEEEPE). The tract at residues 107-131 (FEEYNADVEEEEPEADHQQMGVSQQ) is disordered.

It belongs to the MTURN family.

It is found in the cytoplasm. In terms of biological role, involved in early neuronal development; required for cell cycle exit and differentiation of primary neurons. Cooperates synergistically with pak3 to promote primary neural differentiation within the neural plate. May play a role in promoting megakaryocyte differentiation. This Xenopus laevis (African clawed frog) protein is Maturin (mturn).